The following is a 523-amino-acid chain: MAPKKKPNKGGKEMQGKKIGGKKDASGTKTPELAMVEELKEFYHKQIQDLEDRLARYQRKWDELAVREKLFHQEFEQLANNKKEIVAFLKRTLNQKVDEITDLNDQLQSLEVAKDMEKDAFEAQLAQVRHEFQEIKDQLTTENIALGIKLSSLEEFRLQKEELTEKYLALEEQLHRQEGEYKEYVYNLEKKSVLDKDRLRKEIIQRVNLVATEFRKMATNQMWETTRRAILENNSVTLQLNKVSKHGVQLLQENEQLKGTQNKLCQQLEMLENTQEIMARKNIGHKKIILMLTEKCRQQRKGTEETEQLRLLLSQLEQNFQNVQRDNQTLRSEKDQLEAQLKEKQAEANRLQEELTKEQKIRANLKTVLIQATSMLQDIVHMQTEAEDGDFDVVFQLQRKELLQQLLVLLSSGVVLKTQPDMGSHQDKQPQGLSKESQRITQTSKEGAVSLLQQLSTITTYKPGDLGLVPRRPVRIPLKPQDLRPLSYITRMGICQNTNEIYPSGALKRFRKFTLPRPFLHRK.

Residues 1–31 form a disordered region; sequence MAPKKKPNKGGKEMQGKKIGGKKDASGTKTP. The segment covering 10–26 has biased composition (basic and acidic residues); the sequence is GGKEMQGKKIGGKKDAS. Residue Thr30 is modified to Phosphothreonine. 3 coiled-coil regions span residues 32 to 191, 248 to 274, and 302 to 371; these read ELAM…LEKK, VQLL…LENT, and GTEE…VLIQ. Residues 419 to 440 form a disordered region; that stretch reads QPDMGSHQDKQPQGLSKESQRI. A compositionally biased stretch (polar residues) spans 429-440; sequence QPQGLSKESQRI.

The protein belongs to the CFAP157 family. Interacts with TUBB and TUBA4A. Interacts with CEP350. In terms of tissue distribution, specifically expressed in tissues containing motile cilia.

It localises to the cytoplasm. The protein localises to the cytoskeleton. Its subcellular location is the cilium basal body. Specifically required during spermatogenesis for flagellum morphogenesis and sperm motility. May be required to suppress the formation of supernumerary axonemes and ensure a correct ultrastructure. The protein is Cilia- and flagella-associated protein 157 of Mus musculus (Mouse).